Here is a 475-residue protein sequence, read N- to C-terminus: Ribulose bisphosphate carboxylase large chain (475 aa).

Positions 1–2 (MS) are excised as a propeptide. Pro-3 bears the N-acetylproline mark. Lys-14 carries the N6,N6,N6-trimethyllysine modification. Substrate is bound by residues Asn-123 and Thr-173. The active-site Proton acceptor is the Lys-175. Lys-177 is a substrate binding site. Mg(2+)-binding residues include Lys-201, Asp-203, and Glu-204. N6-carboxylysine is present on Lys-201. His-294 acts as the Proton acceptor in catalysis. Arg-295, His-327, and Ser-379 together coordinate substrate.

This sequence belongs to the RuBisCO large chain family. Type I subfamily. In terms of assembly, heterohexadecamer of 8 large chains and 8 small chains; disulfide-linked. The disulfide link is formed within the large subunit homodimers. Mg(2+) serves as cofactor. The disulfide bond which can form in the large chain dimeric partners within the hexadecamer appears to be associated with oxidative stress and protein turnover.

The protein localises to the plastid. It localises to the chloroplast. It carries out the reaction 2 (2R)-3-phosphoglycerate + 2 H(+) = D-ribulose 1,5-bisphosphate + CO2 + H2O. The enzyme catalyses D-ribulose 1,5-bisphosphate + O2 = 2-phosphoglycolate + (2R)-3-phosphoglycerate + 2 H(+). RuBisCO catalyzes two reactions: the carboxylation of D-ribulose 1,5-bisphosphate, the primary event in carbon dioxide fixation, as well as the oxidative fragmentation of the pentose substrate in the photorespiration process. Both reactions occur simultaneously and in competition at the same active site. This chain is Ribulose bisphosphate carboxylase large chain, found in Psilotum nudum (Whisk fern).